The sequence spans 92 residues: Probable Fe(2+)-trafficking protein (92 aa).

This sequence belongs to the Fe(2+)-trafficking protein family.

In terms of biological role, could be a mediator in iron transactions between iron acquisition and iron-requiring processes, such as synthesis and/or repair of Fe-S clusters in biosynthetic enzymes. This Anaeromyxobacter sp. (strain Fw109-5) protein is Probable Fe(2+)-trafficking protein.